Consider the following 187-residue polypeptide: Ponticulin-like protein K (187 aa).

The first 19 residues, 1 to 19 (MKNLILLFLLISIINLIQS), serve as a signal peptide directing secretion. N-linked (GlcNAc...) asparagine glycosylation is found at asparagine 31, asparagine 70, asparagine 86, asparagine 93, asparagine 119, asparagine 128, asparagine 146, asparagine 160, and asparagine 161. Positions 115–146 (PSPSNSSNPSPSPNTTSSSSLSSSSLNSNEPN) are enriched in low complexity. Residues 115–161 (PSPSNSSNPSPSPNTTSSSSLSSSSLNSNEPNQTTKPPKTNEPQKNN) are disordered. The segment covering 147–161 (QTTKPPKTNEPQKNN) has biased composition (polar residues). Asparagine 161 carries GPI-like-anchor amidated asparagine lipidation. Positions 162-187 (STSNIPNFFAIFGFLVLIIFILGDKI) are cleaved as a propeptide — removed in mature form.

This sequence belongs to the ponticulin family. The GPI-like-anchor contains a phosphoceramide group, rather than a phosphatidyl group.

It is found in the cell membrane. Functionally, binds F-actin and nucleates actin assembly. This Dictyostelium discoideum (Social amoeba) protein is Ponticulin-like protein K (ponK).